Reading from the N-terminus, the 210-residue chain is Orotate phosphoribosyltransferase (210 aa).

Residues R96, K100, H102, and 122 to 130 (DDLISTGGS) each bind 5-phospho-alpha-D-ribose 1-diphosphate. Residue S126 participates in orotate binding.

Belongs to the purine/pyrimidine phosphoribosyltransferase family. PyrE subfamily. As to quaternary structure, homodimer. Mg(2+) is required as a cofactor.

It carries out the reaction orotidine 5'-phosphate + diphosphate = orotate + 5-phospho-alpha-D-ribose 1-diphosphate. It participates in pyrimidine metabolism; UMP biosynthesis via de novo pathway; UMP from orotate: step 1/2. Functionally, catalyzes the transfer of a ribosyl phosphate group from 5-phosphoribose 1-diphosphate to orotate, leading to the formation of orotidine monophosphate (OMP). This chain is Orotate phosphoribosyltransferase, found in Levilactobacillus brevis (strain ATCC 367 / BCRC 12310 / CIP 105137 / JCM 1170 / LMG 11437 / NCIMB 947 / NCTC 947) (Lactobacillus brevis).